The following is a 508-amino-acid chain: Photosystem II CP47 reaction center protein (508 aa).

6 helical membrane passes run 21-36 (AVHI…WAGS), 101-115 (IVFS…IWHW), 140-156 (GIHL…FGAF), 203-218 (IAAG…FHLS), 237-252 (VLSS…AFVV), and 457-472 (SFAL…HGSR).

Belongs to the PsbB/PsbC family. PsbB subfamily. In terms of assembly, PSII is composed of 1 copy each of membrane proteins PsbA, PsbB, PsbC, PsbD, PsbE, PsbF, PsbH, PsbI, PsbJ, PsbK, PsbL, PsbM, PsbT, PsbX, PsbY, PsbZ, Psb30/Ycf12, at least 3 peripheral proteins of the oxygen-evolving complex and a large number of cofactors. It forms dimeric complexes. The cofactor is Binds multiple chlorophylls. PSII binds additional chlorophylls, carotenoids and specific lipids..

It is found in the plastid. Its subcellular location is the chloroplast thylakoid membrane. In terms of biological role, one of the components of the core complex of photosystem II (PSII). It binds chlorophyll and helps catalyze the primary light-induced photochemical processes of PSII. PSII is a light-driven water:plastoquinone oxidoreductase, using light energy to abstract electrons from H(2)O, generating O(2) and a proton gradient subsequently used for ATP formation. In Populus trichocarpa (Western balsam poplar), this protein is Photosystem II CP47 reaction center protein.